A 497-amino-acid chain; its full sequence is MNIKITSGHLKNARVRAVISFSFKEDRKLSPEIEDLDRILDGAISQLKREQKFDGSDGKILVVPTFGKGKMDYVILIGAGSRRKADLDKVRRLGNISVKTTKKLKIDRFLIDAEPLSVIKEGEDSIAQAVVEGVILGNYRFDKYLSKKDEYRIKELQIRVKRRFKNKAEQSVKVGKILAESQNFTRDIVNEPGNVITPEKLAQIAQDLAREYGFEVKIYDEEEIEKMGMNAYLAVAKGSANPPRFIHIIYRPEKPKKKIALIGKGLTFDSGGLNIKPGDYMRWMKADKSGACAVLGIFKAIGQLKPDVEVHGIIAAAENMPDGRSYRPDDIIKAKNGVTIEIGNTDAEGRLTLADALCYASELKPDAIIDMATLTGACVVALGEYTAGVMGNDERLIDQILDISKRTGEWMWPLPFNDMLREHIKAPHADVYNIGTTRYGGAITAGLFLEKFVDKKIPWVHIDIAGPAHNTKGWYYHPKGATGFPVRTITTFLLNQE.

K264 and D269 together coordinate Mn(2+). The active site involves K276. Mn(2+) is bound by residues D287, D346, and E348. R350 is a catalytic residue.

Belongs to the peptidase M17 family. Mn(2+) serves as cofactor.

The protein localises to the cytoplasm. The catalysed reaction is Release of an N-terminal amino acid, Xaa-|-Yaa-, in which Xaa is preferably Leu, but may be other amino acids including Pro although not Arg or Lys, and Yaa may be Pro. Amino acid amides and methyl esters are also readily hydrolyzed, but rates on arylamides are exceedingly low.. The enzyme catalyses Release of an N-terminal amino acid, preferentially leucine, but not glutamic or aspartic acids.. In terms of biological role, presumably involved in the processing and regular turnover of intracellular proteins. Catalyzes the removal of unsubstituted N-terminal amino acids from various peptides. The polypeptide is Probable cytosol aminopeptidase (Persephonella marina (strain DSM 14350 / EX-H1)).